The sequence spans 289 residues: tRNA pseudouridine synthase A (289 aa).

The active-site Nucleophile is the Asp53. Tyr119 provides a ligand contact to substrate.

The protein belongs to the tRNA pseudouridine synthase TruA family. In terms of assembly, homodimer.

The enzyme catalyses uridine(38/39/40) in tRNA = pseudouridine(38/39/40) in tRNA. Its function is as follows. Formation of pseudouridine at positions 38, 39 and 40 in the anticodon stem and loop of transfer RNAs. In Corynebacterium glutamicum (strain ATCC 13032 / DSM 20300 / JCM 1318 / BCRC 11384 / CCUG 27702 / LMG 3730 / NBRC 12168 / NCIMB 10025 / NRRL B-2784 / 534), this protein is tRNA pseudouridine synthase A.